We begin with the raw amino-acid sequence, 855 residues long: Endochitinase 2 (855 aa).

A signal peptide spans methionine 1 to alanine 22. One can recognise a GH18 domain in the interval serine 29–cysteine 340. A glycan (N-linked (GlcNAc...) asparagine) is linked at asparagine 90. Glutamate 175 acts as the Proton donor in catalysis. Residues aspartate 341–arginine 672 form a disordered region. A compositionally biased stretch (low complexity) spans threonine 346–serine 400. Over residues isoleucine 401 to proline 456 the composition is skewed to polar residues. Low complexity predominate over residues serine 457–threonine 483. The span at lysine 484 to glycine 521 shows a compositional bias: polar residues. Residues serine 522–serine 533 show a composition bias toward low complexity. Positions alanine 534–proline 555 are enriched in polar residues. A compositionally biased stretch (low complexity) spans threonine 556–serine 567. A compositionally biased stretch (polar residues) spans methionine 568–glycine 641. Low complexity-rich tracts occupy residues threonine 642 to threonine 652 and threonine 659 to arginine 672. Glycine 826 carries GPI-anchor amidated glycine lipidation. Positions serine 827–leucine 855 are cleaved as a propeptide — removed in mature form.

Belongs to the glycosyl hydrolase 18 family. Chitinase class III subfamily.

The protein localises to the cell membrane. It catalyses the reaction Random endo-hydrolysis of N-acetyl-beta-D-glucosaminide (1-&gt;4)-beta-linkages in chitin and chitodextrins.. Its function is as follows. May be associated with endosporulation. The protein is Endochitinase 2 (CTS2) of Coccidioides posadasii (strain C735) (Valley fever fungus).